Here is a 368-residue protein sequence, read N- to C-terminus: N-acetylneuraminate epimerase (368 aa).

Residues methionine 1 to alanine 19 form the signal peptide. 7 Kelch repeats span residues threonine 40–aspartate 84, asparagine 86–asparagine 137, lysine 139–alanine 173, histidine 174–glycine 219, threonine 222–glycine 265, glutamate 287–asparagine 336, and leucine 338–glutamine 367. The Proton acceptor role is filled by glutamate 228.

It belongs to the NanM family. Homodimer.

It localises to the periplasm. It catalyses the reaction N-acetyl-alpha-neuraminate = N-acetyl-beta-neuraminate. Converts alpha-N-acetylneuranimic acid (Neu5Ac) to the beta-anomer, accelerating the equilibrium between the alpha- and beta-anomers. Probably facilitates sialidase-negative bacteria to compete successfully for limited amounts of extracellular Neu5Ac, which is likely taken up in the beta-anomer. In addition, the rapid removal of sialic acid from solution might be advantageous to the bacterium to damp down host responses. This is N-acetylneuraminate epimerase from Shigella flexneri serotype 5b (strain 8401).